A 64-amino-acid chain; its full sequence is Large ribosomal subunit protein bL35 (64 aa).

The segment covering 1–14 has biased composition (basic residues); the sequence is MKQKTHKGTAKRIK. The interval 1–48 is disordered; it reads MKQKTHKGTAKRIKVTGSGKLRREQANRRHLLEGKPSKRTRRLKGTED. Basic and acidic residues predominate over residues 21–36; sequence LRREQANRRHLLEGKP.

The protein belongs to the bacterial ribosomal protein bL35 family.

The protein is Large ribosomal subunit protein bL35 of Corynebacterium aurimucosum (strain ATCC 700975 / DSM 44827 / CIP 107346 / CN-1) (Corynebacterium nigricans).